Here is a 490-residue protein sequence, read N- to C-terminus: Allantoin permease (490 aa).

12 helical membrane-spanning segments follow: residues 36-56, 60-80, 116-136, 151-171, 190-210, 225-245, 265-285, 308-328, 350-370, 373-393, 425-445, and 448-468; these read IWMGCIHNIPTYATVGGLIAI, PWQVLAIIITASLILFGALAL, AIMWLGIQTFAGSTALNILLL, ILGIHLSGLLSFVFFWAIHLL, LVYLVFGGMVWWAVDIAGGLG, TFWPFAAGVTGIIGIWATLIL, FYGLPGTFALFAFASITVTSG, YVIVLSVITLCIATISVNVAA, GSFITALLALFTVPWKLMESA, VYAFLGLIGGMLGPVAGVMMA, AFAATMLGALISLIGMYVPVL, and LYDISWFVGVLISFLFYIVLM.

Belongs to the purine-cytosine permease (2.A.39) family.

It localises to the cell membrane. It catalyses the reaction (S)-allantoin(in) + H(+)(in) = (S)-allantoin(out) + H(+)(out). Uptake of allantoin into the cell. Allantoin uptake is not dependent on sodium, and PucI is likely to be a proton-coupled symporter. Shows highest recognition for binding of allantoin, good recognition for binding of hydantoin, L-5-benzylhydantoin and 5-hydroxyhydantoin, and to a lesser extent for a range of nucleobases and nucleosides. The polypeptide is Allantoin permease (Bacillus subtilis (strain 168)).